The primary structure comprises 380 residues: Large ribosomal subunit protein mL38 (380 aa).

The transit peptide at 1–26 (MAAPWWRAAFSVTGRCRGISTSASLS) directs the protein to the mitochondrion. A coiled-coil region spans residues 98-123 (SRTQKLQERKRFLQELRANSEEERAA).

The protein belongs to the phosphatidylethanolamine-binding protein family. Mitochondrion-specific ribosomal protein mL38 subfamily. In terms of assembly, component of the mitochondrial ribosome large subunit (39S) which comprises a 16S rRNA and about 50 distinct proteins.

It localises to the mitochondrion. The chain is Large ribosomal subunit protein mL38 (Mrpl38) from Rattus norvegicus (Rat).